Here is a 106-residue protein sequence, read N- to C-terminus: Phosphoribosyl-ATP pyrophosphatase (106 aa).

It belongs to the PRA-PH family.

The protein localises to the cytoplasm. It catalyses the reaction 1-(5-phospho-beta-D-ribosyl)-ATP + H2O = 1-(5-phospho-beta-D-ribosyl)-5'-AMP + diphosphate + H(+). Its pathway is amino-acid biosynthesis; L-histidine biosynthesis; L-histidine from 5-phospho-alpha-D-ribose 1-diphosphate: step 2/9. The chain is Phosphoribosyl-ATP pyrophosphatase from Geotalea daltonii (strain DSM 22248 / JCM 15807 / FRC-32) (Geobacter daltonii).